Consider the following 343-residue polypeptide: MSSIDLKSKFLKVYDTLKSELINDPAFEFDDDSRQWIEKMLDYNVPGGKLNRGLSVVDSYQLLKGGELSDDEIFLSSALGWCIEWLQAYFLVLDDIMDESHTRRGQPCWFRLPKVGMIAANDGILLRNHVPRILKKHFRGKPYYVDLVDLFNEVEFQTASGQMIDLITTLVGEKDLSKYSLSIHRRIVQYKTAYYSFYLPVACALLMFGEDLDKHVEVKNVLVEMGTYFQVQDDYLDCFGAPEVIGKIGTDIEDFKCSWLVVKALELANEEQKKVLHENYGKKDPASVAKVKEVYHTLNLQAVFEDYEATSYKKLITSIENHPSKAVQAVLKSFLGKIYKRQK.

Lys-49, Arg-52, and Gln-87 together coordinate isopentenyl diphosphate. Residues Asp-94 and Asp-98 each coordinate Mg(2+). Arg-103 lines the dimethylallyl diphosphate pocket. Residue Arg-104 participates in isopentenyl diphosphate binding. Residues Lys-191, Thr-192, Gln-230, Lys-247, and Lys-256 each coordinate dimethylallyl diphosphate.

The protein belongs to the FPP/GGPP synthase family. Mg(2+) serves as cofactor. Expressed both in apical and sub-apical cells of glandular secretory trichomes.

The protein localises to the cytoplasm. The protein resides in the nucleus. The catalysed reaction is isopentenyl diphosphate + dimethylallyl diphosphate = (2E)-geranyl diphosphate + diphosphate. It carries out the reaction isopentenyl diphosphate + (2E)-geranyl diphosphate = (2E,6E)-farnesyl diphosphate + diphosphate. The protein operates within isoprenoid biosynthesis; farnesyl diphosphate biosynthesis; farnesyl diphosphate from geranyl diphosphate and isopentenyl diphosphate: step 1/1. Its pathway is sesquiterpene biosynthesis. It functions in the pathway isoprenoid biosynthesis; geranyl diphosphate biosynthesis; geranyl diphosphate from dimethylallyl diphosphate and isopentenyl diphosphate: step 1/1. Functionally, involved in the biosynthesis of the antimalarial endoperoxide artemisinin. Catalyzes the sequential condensation of isopentenyl pyrophosphate with the allylic pyrophosphates, dimethylallyl pyrophosphate, and then with the resultant geranylpyrophosphate to the ultimate product farnesyl pyrophosphate. Promotes anti-malarial and antimicrobial (toward Gram-positive bacteria B.subtilis and S.aureus) activities of plant crude extract probably by triggering artemisinin levels. This is Farnesyl pyrophosphate synthase from Artemisia annua (Sweet wormwood).